A 107-amino-acid chain; its full sequence is Small ribosomal subunit protein bS18 (107 aa).

It belongs to the bacterial ribosomal protein bS18 family. Part of the 30S ribosomal subunit. Forms a tight heterodimer with protein bS6.

Binds as a heterodimer with protein bS6 to the central domain of the 16S rRNA, where it helps stabilize the platform of the 30S subunit. The sequence is that of Small ribosomal subunit protein bS18 from Mycoplasmopsis agalactiae (strain NCTC 10123 / CIP 59.7 / PG2) (Mycoplasma agalactiae).